A 262-amino-acid chain; its full sequence is Tetratricopeptide repeat protein 33 (262 aa).

Residues 17-63 are disordered; sequence ATSQQFEAEAADEKDAAENEDGNWLQASKRRKETLQEGCKQRSQQLK. TPR repeat units follow at residues 59 to 92, 93 to 126, and 127 to 160; these read SQQL…TPGD, ATLY…NPHS, and WEAW…YPMN. The residue at position 197 (Ser-197) is a Phosphoserine.

The protein is Tetratricopeptide repeat protein 33 (Ttc33) of Mus musculus (Mouse).